We begin with the raw amino-acid sequence, 283 residues long: Probable endonuclease 4 (283 aa).

Zn(2+)-binding residues include H69, H109, E145, D179, H182, H216, D229, H231, and E261.

It belongs to the AP endonuclease 2 family. Zn(2+) is required as a cofactor.

It carries out the reaction Endonucleolytic cleavage to 5'-phosphooligonucleotide end-products.. Its function is as follows. Endonuclease IV plays a role in DNA repair. It cleaves phosphodiester bonds at apurinic or apyrimidinic (AP) sites, generating a 3'-hydroxyl group and a 5'-terminal sugar phosphate. The sequence is that of Probable endonuclease 4 from Desulfosudis oleivorans (strain DSM 6200 / JCM 39069 / Hxd3) (Desulfococcus oleovorans).